The following is a 141-amino-acid chain: Nucleoside triphosphatase NudI (141 aa).

The Nudix hydrolase domain occupies 1-141 (MRQRTIVCPL…RKTLRLKGLL (141 aa)). A Nudix box motif is present at residues 38–59 (GGVEPGERIEEALRREIREELG).

The protein belongs to the Nudix hydrolase family. NudI subfamily. In terms of assembly, monomer. Requires Mg(2+) as cofactor.

It carries out the reaction a ribonucleoside 5'-triphosphate + H2O = a ribonucleoside 5'-phosphate + diphosphate + H(+). It catalyses the reaction a 2'-deoxyribonucleoside 5'-triphosphate + H2O = a 2'-deoxyribonucleoside 5'-phosphate + diphosphate + H(+). The enzyme catalyses dUTP + H2O = dUMP + diphosphate + H(+). The catalysed reaction is dTTP + H2O = dTMP + diphosphate + H(+). It carries out the reaction dCTP + H2O = dCMP + diphosphate + H(+). Functionally, catalyzes the hydrolysis of nucleoside triphosphates, with a preference for pyrimidine deoxynucleoside triphosphates (dUTP, dTTP and dCTP). This Escherichia coli O17:K52:H18 (strain UMN026 / ExPEC) protein is Nucleoside triphosphatase NudI.